Consider the following 329-residue polypeptide: Glyceraldehyde-3-phosphate dehydrogenase 1 (329 aa).

NAD(+) is bound by residues 11–12, Asp33, and Glu77; that span reads RI. The residue at position 148 (Ser148) is a Phosphoserine. 148 to 150 lines the D-glyceraldehyde 3-phosphate pocket; it reads SCT. Catalysis depends on Cys149, which acts as the Nucleophile. Ser177 is modified (phosphoserine). D-glyceraldehyde 3-phosphate is bound at residue Thr179. Ser200 carries the post-translational modification Phosphoserine. D-glyceraldehyde 3-phosphate is bound by residues 208–209 and Arg231; that span reads TG. Asn313 contacts NAD(+).

The protein belongs to the glyceraldehyde-3-phosphate dehydrogenase family. As to quaternary structure, homotetramer.

The protein resides in the cytoplasm. It catalyses the reaction D-glyceraldehyde 3-phosphate + phosphate + NAD(+) = (2R)-3-phospho-glyceroyl phosphate + NADH + H(+). Its pathway is carbohydrate degradation; glycolysis; pyruvate from D-glyceraldehyde 3-phosphate: step 1/5. The protein is Glyceraldehyde-3-phosphate dehydrogenase 1 of Kluyveromyces marxianus (Yeast).